The sequence spans 257 residues: Ribonuclease HII (257 aa).

One can recognise an RNase H type-2 domain in the interval 71–257 (ELIAGIDEVG…EPIKSMVNFK (187 aa)). The a divalent metal cation site is built by aspartate 77, glutamate 78, and aspartate 169.

Belongs to the RNase HII family. Requires Mn(2+) as cofactor. Mg(2+) is required as a cofactor.

Its subcellular location is the cytoplasm. It catalyses the reaction Endonucleolytic cleavage to 5'-phosphomonoester.. In terms of biological role, endonuclease that specifically degrades the RNA of RNA-DNA hybrids. This chain is Ribonuclease HII (rnhB), found in Lactococcus lactis subsp. cremoris (strain MG1363).